A 116-amino-acid chain; its full sequence is Large ribosomal subunit protein uL18 (116 aa).

The protein belongs to the universal ribosomal protein uL18 family. Part of the 50S ribosomal subunit; part of the 5S rRNA/L5/L18/L25 subcomplex. Contacts the 5S and 23S rRNAs.

This is one of the proteins that bind and probably mediate the attachment of the 5S RNA into the large ribosomal subunit, where it forms part of the central protuberance. This is Large ribosomal subunit protein uL18 from Pseudomonas fluorescens (strain SBW25).